A 348-amino-acid chain; its full sequence is Flagellar P-ring protein (348 aa).

The first 16 residues, 1 to 16 (MRVLTIFLLFMTSIFA), serve as a signal peptide directing secretion.

It belongs to the FlgI family. In terms of assembly, the basal body constitutes a major portion of the flagellar organelle and consists of four rings (L,P,S, and M) mounted on a central rod.

The protein resides in the periplasm. It is found in the bacterial flagellum basal body. In terms of biological role, assembles around the rod to form the L-ring and probably protects the motor/basal body from shearing forces during rotation. The chain is Flagellar P-ring protein from Campylobacter jejuni subsp. doylei (strain ATCC BAA-1458 / RM4099 / 269.97).